A 483-amino-acid chain; its full sequence is MTAAVTENNGAGSDSSVAGRVVRVIGPVVDVEFPRGAIPELFNALHAEITLPSVAKTLTLEVAQHLGDNLVRTVSMQPTDGLIRGTSVSDTGKPISVPVGDVVKGHVFNALGDCLDAPGTGRDGEQWGIHRKPPAFDQLEGKTEILETGIKVIDLLTPYVKGGKIGLFGGAGVGKTVLIQEMITRIAREFSGTSVFAGVGERTREGTDLHLEMEEMGVLQDTALVFGQMDEPPGTRMRVALSALTMAEYFRDVQGQDVLLFIDNIFRFTQAGSEVSTLLGRMPSAVGYQPTLADEMGELQERITSTRGRSITSLQAIYVPADDYTDPAPATTFAHLDATTELSRPISQMGIYPAVDPLTSTSRILEPGIVGAEHFRVANEVKRILQKYKELQDIIAILGMDELQEEDKVLVGRARRLQKFLGQNFIVAEKFTGEPGSVVPLRDTIEAFDRICKGEFDHLPEQAFNSCGGLDDVEAAAKKIAGK.

169–176 (GGAGVGKT) is an ATP binding site.

The protein belongs to the ATPase alpha/beta chains family. F-type ATPases have 2 components, CF(1) - the catalytic core - and CF(0) - the membrane proton channel. CF(1) has five subunits: alpha(3), beta(3), gamma(1), delta(1), epsilon(1). CF(0) has three main subunits: a(1), b(2) and c(9-12). The alpha and beta chains form an alternating ring which encloses part of the gamma chain. CF(1) is attached to CF(0) by a central stalk formed by the gamma and epsilon chains, while a peripheral stalk is formed by the delta and b chains.

The protein localises to the cell membrane. The catalysed reaction is ATP + H2O + 4 H(+)(in) = ADP + phosphate + 5 H(+)(out). Produces ATP from ADP in the presence of a proton gradient across the membrane. The catalytic sites are hosted primarily by the beta subunits. The protein is ATP synthase subunit beta of Rhodococcus opacus (strain B4).